Consider the following 209-residue polypeptide: Methylated-DNA--protein-cysteine methyltransferase (209 aa).

Cys-5 contributes to the Zn(2+) binding site. Phosphoserine is present on Ser-14. Zn(2+) contacts are provided by Cys-24 and His-29. Residues 35–57 form a disordered region; the sequence is SGKTPSSDPKEAPASPELLGGPE. His-89 serves as a coordination point for Zn(2+). DNA contacts are provided by Thr-99, Tyr-118, Gln-119, Asn-127, and Arg-132. Cys-149 functions as the Nucleophile; methyl group acceptor in the catalytic mechanism. Ser-155 provides a ligand contact to DNA. Ser-205 is modified (phosphoserine).

It belongs to the MGMT family. Zn(2+) is required as a cofactor.

The protein resides in the nucleus. It carries out the reaction a 6-O-methyl-2'-deoxyguanosine in DNA + L-cysteinyl-[protein] = S-methyl-L-cysteinyl-[protein] + a 2'-deoxyguanosine in DNA. The catalysed reaction is a 4-O-methyl-thymidine in DNA + L-cysteinyl-[protein] = a thymidine in DNA + S-methyl-L-cysteinyl-[protein]. In terms of biological role, involved in the cellular defense against the biological effects of O6-methylguanine (O6-MeG) and O4-methylthymine (O4-MeT) in DNA. Repairs the methylated nucleobase in DNA by stoichiometrically transferring the methyl group to a cysteine residue in the enzyme. This is a suicide reaction: the enzyme is irreversibly inactivated. The protein is Methylated-DNA--protein-cysteine methyltransferase (MGMT) of Cricetulus griseus (Chinese hamster).